The sequence spans 46 residues: Transcriptional regulator SEHBP (46 aa).

In terms of assembly, interacts with histone H2B. Also interacts with chromatin-binding proteins HMGN1 and HMGN3.

It localises to the nucleus. The protein resides in the cytoplasm. Its function is as follows. Plays a role in transcription regulation. The polypeptide is Transcriptional regulator SEHBP (Homo sapiens (Human)).